A 590-amino-acid polypeptide reads, in one-letter code: Aspartate--tRNA(Asp/Asn) ligase (590 aa).

Position 175 (glutamate 175) interacts with L-aspartate. The interval 199 to 202 is aspartate; sequence QQYK. The L-aspartate site is built by arginine 221 and histidine 450. 221–223 contributes to the ATP binding site; it reads RDE. ATP is bound at residue glutamate 484. L-aspartate is bound at residue arginine 491. Position 536–539 (536–539) interacts with ATP; sequence GVDR.

The protein belongs to the class-II aminoacyl-tRNA synthetase family. Type 1 subfamily. As to quaternary structure, homodimer.

The protein localises to the cytoplasm. It catalyses the reaction tRNA(Asx) + L-aspartate + ATP = L-aspartyl-tRNA(Asx) + AMP + diphosphate. Its function is as follows. Aspartyl-tRNA synthetase with relaxed tRNA specificity since it is able to aspartylate not only its cognate tRNA(Asp) but also tRNA(Asn). Reaction proceeds in two steps: L-aspartate is first activated by ATP to form Asp-AMP and then transferred to the acceptor end of tRNA(Asp/Asn). The chain is Aspartate--tRNA(Asp/Asn) ligase from Bradyrhizobium sp. (strain BTAi1 / ATCC BAA-1182).